The following is a 297-amino-acid chain: Phosphatidylglycerol--prolipoprotein diacylglyceryl transferase (297 aa).

Helical transmembrane passes span 20 to 40 (FLTI…GLFV), 50 to 70 (INPL…IIGA), 105 to 125 (AVWE…LSII), and 133 to 153 (IHLK…QSIG). Arginine 154 is a binding site for a 1,2-diacyl-sn-glycero-3-phospho-(1'-sn-glycerol). 3 helical membrane-spanning segments follow: residues 193–213 (PTFL…IFVF), 225–245 (GFIS…IEGL), and 266–286 (AQFI…FLRL).

The protein belongs to the Lgt family.

The protein localises to the cell inner membrane. It carries out the reaction L-cysteinyl-[prolipoprotein] + a 1,2-diacyl-sn-glycero-3-phospho-(1'-sn-glycerol) = an S-1,2-diacyl-sn-glyceryl-L-cysteinyl-[prolipoprotein] + sn-glycerol 1-phosphate + H(+). Its pathway is protein modification; lipoprotein biosynthesis (diacylglyceryl transfer). Its function is as follows. Catalyzes the transfer of the diacylglyceryl group from phosphatidylglycerol to the sulfhydryl group of the N-terminal cysteine of a prolipoprotein, the first step in the formation of mature lipoproteins. The sequence is that of Phosphatidylglycerol--prolipoprotein diacylglyceryl transferase from Prochlorococcus marinus (strain MIT 9312).